The following is a 317-amino-acid chain: Beta-ketoacyl-[acyl-carrier-protein] synthase III (317 aa).

Catalysis depends on residues cysteine 112 and histidine 244. The ACP-binding stretch occupies residues 245 to 249 (QANLR). Asparagine 274 is an active-site residue.

It belongs to the thiolase-like superfamily. FabH family. As to quaternary structure, homodimer.

The protein resides in the cytoplasm. The enzyme catalyses malonyl-[ACP] + acetyl-CoA + H(+) = 3-oxobutanoyl-[ACP] + CO2 + CoA. The protein operates within lipid metabolism; fatty acid biosynthesis. Catalyzes the condensation reaction of fatty acid synthesis by the addition to an acyl acceptor of two carbons from malonyl-ACP. Catalyzes the first condensation reaction which initiates fatty acid synthesis and may therefore play a role in governing the total rate of fatty acid production. Possesses both acetoacetyl-ACP synthase and acetyl transacylase activities. Its substrate specificity determines the biosynthesis of branched-chain and/or straight-chain of fatty acids. This is Beta-ketoacyl-[acyl-carrier-protein] synthase III from Salmonella typhimurium (strain LT2 / SGSC1412 / ATCC 700720).